A 245-amino-acid chain; its full sequence is Transmembrane protein 116 (245 aa).

4 helical membrane-spanning segments follow: residues 24-44, 88-108, 141-161, and 173-195; these read MAFVFSSLIPLLLMTPVFCLG, GIAIFLGSFVLSLLTIMVLLI, FYPVAFFCCWGPAVILMIIKL, and LYVLQALTATSQGLLNCGVYGWT.

It localises to the membrane. In Homo sapiens (Human), this protein is Transmembrane protein 116 (TMEM116).